The following is a 275-amino-acid chain: MSLVLAVYGKGGIGKSTTSANISAALALKGAKVLQIGCDPKHDSTFPITGKLQKTVIEALEEVDFHHEELSAEDIIETGFAGIDCLEAGGPPAGSGCGGYVVGESVALLQELGLYDKYDVILFDVLGDVVCGGFSAPLNYADYAIIIATNDFDSIFAANRLCMAIQQKSVRYKVKLAGIVANRVDYVTGGGTNMLDQFAEKVGTKLLAKVPYHELIRKSRFAGKTMYAMEDTPDKEECLKPYNEIADFLIQESPIASVPVPIGDREIFKMVNGWQ.

Residues 12–17 and Lys-41 contribute to the ATP site; that span reads GIGKST. Ser-16 contributes to the Mg(2+) binding site. Cys-97 and Cys-131 together coordinate [4Fe-4S] cluster. An ATP-binding site is contributed by 182-183; sequence NR.

The protein belongs to the NifH/BchL/ChlL family. Homodimer. Protochlorophyllide reductase is composed of three subunits; BchL, BchN and BchB. [4Fe-4S] cluster is required as a cofactor.

It catalyses the reaction chlorophyllide a + oxidized 2[4Fe-4S]-[ferredoxin] + 2 ADP + 2 phosphate = protochlorophyllide a + reduced 2[4Fe-4S]-[ferredoxin] + 2 ATP + 2 H2O. It participates in porphyrin-containing compound metabolism; bacteriochlorophyll biosynthesis (light-independent). Component of the dark-operative protochlorophyllide reductase (DPOR) that uses Mg-ATP and reduced ferredoxin to reduce ring D of protochlorophyllide (Pchlide) to form chlorophyllide a (Chlide). This reaction is light-independent. The L component serves as a unique electron donor to the NB-component of the complex, and binds Mg-ATP. The polypeptide is Light-independent protochlorophyllide reductase iron-sulfur ATP-binding protein (Pelodictyon phaeoclathratiforme (strain DSM 5477 / BU-1)).